Here is a 180-residue protein sequence, read N- to C-terminus: Large ribosomal subunit protein uL5 (180 aa).

The protein belongs to the universal ribosomal protein uL5 family. In terms of assembly, part of the 50S ribosomal subunit; part of the 5S rRNA/L5/L18/L25 subcomplex. Contacts the 5S rRNA and the P site tRNA. Forms a bridge to the 30S subunit in the 70S ribosome.

In terms of biological role, this is one of the proteins that bind and probably mediate the attachment of the 5S RNA into the large ribosomal subunit, where it forms part of the central protuberance. In the 70S ribosome it contacts protein S13 of the 30S subunit (bridge B1b), connecting the 2 subunits; this bridge is implicated in subunit movement. Contacts the P site tRNA; the 5S rRNA and some of its associated proteins might help stabilize positioning of ribosome-bound tRNAs. This chain is Large ribosomal subunit protein uL5, found in Solibacter usitatus (strain Ellin6076).